Here is an 82-residue protein sequence, read N- to C-terminus: Delta-ctenitoxin-Pn2c (82 aa).

An N-terminal signal peptide occupies residues 1–17 (MKVAILFLSILVLAVAS). Residues 18–34 (ESIEESRDDFAVEELGR) constitute a propeptide that is removed on maturation. 5 cysteine pairs are disulfide-bonded: C37/C51, C44/C57, C48/C80, C50/C65, and C59/C63.

In terms of tissue distribution, expressed by the venom gland.

It localises to the secreted. In terms of biological role, reversible inhibitor of voltage-gated sodium channels (Nav). Delays the fast inactivation kinetics of neuronal-type sodium channels. In vivo, it induces rat penile erection. This effect may be due to the neuronal nitric oxide synthase (NOS1), since one of its selective inhibitor completely abolishes all the toxic effects of the toxin. This toxin also causes scratching, lacrimation, hypersalivation, sweating and agitation followed by spastic paralysis of the anterior and posterior extremities and death at dose levels of 0.24 mg/mouse. It is also insecticidal to the larval and adult forms of the house fly. The polypeptide is Delta-ctenitoxin-Pn2c (Phoneutria nigriventer (Brazilian armed spider)).